The primary structure comprises 503 residues: MENLSDRFNVLQDQLMNIYESAANTIESQIEHWQTLRKEAVLLYFARQKGVTRLGYQYVPPLAVSESRAKQAIGMMLQLQSLQKSEYAKEPWSLVDTSAETFRSPPENHFKKGPVSVEVIYDNDKDNANAYTMWRYVYYVDDDDQWHKSPSGVNHTGIYFMQGTFRHYYVLFADDASRYSRTGHWEVNVNKETVFAPVTSSTPPDSPGGQADSNTSSTTPATTTDSTSRLSSTRKQSQQTNTKGRRYGRRPSSRTRRTTQTHQRRRSRSKSRSRSRSRSRLRSRSRSRSRSYSRSRSQSSDQPQYRFRSGGQVSLITTATTTTTTATNYSTRGSGRGSSSTSSSTSKRPRRPRGGAIGGSSGRGRRSSSTSPSPSKRSRGKSESVRQRGISPDDVGKSLQSVSTRNTGRLGRLLDEALDPPVILVRGEPNTLKCFRNRAKLKYAGLYKAFSTAWSWVAGDGTERLGRSRMLISFFSFEQRKDFDKTVKYPKGVDRSYGSFDSL.

The tract at residues 1–201 is transactivation domain; that stretch reads MENLSDRFNV…ETVFAPVTSS (201 aa). The segment at 196–404 is disordered; sequence APVTSSTPPD…VGKSLQSVST (209 aa). The segment covering 213–234 has biased composition (low complexity); that stretch reads SNTSSTTPATTTDSTSRLSSTR. Over residues 243-293 the composition is skewed to basic residues; that stretch reads KGRRYGRRPSSRTRRTTQTHQRRRSRSKSRSRSRSRSRLRSRSRSRSRSYS. Low complexity predominate over residues 317 to 346; that stretch reads TTATTTTTTATNYSTRGSGRGSSSTSSSTS. The tract at residues 419 to 503 is DNA-binding domain; that stretch reads DPPVILVRGE…DRSYGSFDSL (85 aa).

This sequence belongs to the papillomaviridae E2 protein family. In terms of assembly, binds DNA as homodimer. Interacts with protein E1; this interaction greatly increases E1 DNA-binding activity. Interacts with protein L1; this interaction enhances E2-dependent replication and transcription activation. Interacts with protein L2; this interaction inhibits E2 transcriptional activity but not DNA replication function E2. Interacts with protein E7; this interaction inhibits E7 oncogenic activity. Interacts with host TAF1; this interaction modulates E2-dependent transcriptional regulation. Interacts with host BRD4; this interaction mediates E2 transcriptional activation function. Additionally, the interaction with host BRD4 on mitotic chromosomes mediates tethering of the viral genome. Interacts with host TOPBP1; this interaction is required for optimal viral DNA replication. Phosphorylated.

It localises to the host nucleus. Plays a role in the initiation of viral DNA replication. A dimer of E2 interacts with a dimer of E1 in order to improve specificity of E1 DNA binding activity. Once the complex recognizes and binds DNA at specific sites, the E2 dimer is removed from DNA. E2 also regulates viral transcription through binding to the E2RE response element (5'-ACCNNNNNNGGT-3') present in multiple copies in the regulatory regions of the viral genome. Activates or represses transcription depending on E2RE's position with regards to proximal promoter elements including the TATA-box. Repression occurs by sterically hindering the assembly of the transcription initiation complex. In Human papillomavirus 21, this protein is Regulatory protein E2.